The chain runs to 695 residues: Pre-mRNA-splicing factor CLF1 (695 aa).

HAT repeat units lie at residues 41–73 (DVQR…FEIE), 75–107 (HDMR…SELK), 109–141 (GYIN…VEES), 143–174 (AHFD…FEVR), 176–207 (ERYE…FEVR), 296–328 (TIIL…LLEN), 333–365 (LVME…IWIK), 375–412 (NDIP…FEIR), 414–445 (DNLE…LETK), 447–479 (REFD…FEDS), 521–553 (QNFD…KKLT), and 591–629 (NNKD…FEGQ).

Belongs to the crooked-neck family. Associated with the spliceosome.

The protein localises to the nucleus. In terms of biological role, involved in pre-mRNA splicing and cell cycle progression. Required for the spliceosome assembly and initiation of the DNA replication. The protein is Pre-mRNA-splicing factor CLF1 (CLF1) of Candida glabrata (strain ATCC 2001 / BCRC 20586 / JCM 3761 / NBRC 0622 / NRRL Y-65 / CBS 138) (Yeast).